Consider the following 204-residue polypeptide: ATP phosphoribosyltransferase (204 aa).

It belongs to the ATP phosphoribosyltransferase family. Short subfamily. In terms of assembly, heteromultimer composed of HisG and HisZ subunits.

It localises to the cytoplasm. It catalyses the reaction 1-(5-phospho-beta-D-ribosyl)-ATP + diphosphate = 5-phospho-alpha-D-ribose 1-diphosphate + ATP. The protein operates within amino-acid biosynthesis; L-histidine biosynthesis; L-histidine from 5-phospho-alpha-D-ribose 1-diphosphate: step 1/9. Functionally, catalyzes the condensation of ATP and 5-phosphoribose 1-diphosphate to form N'-(5'-phosphoribosyl)-ATP (PR-ATP). Has a crucial role in the pathway because the rate of histidine biosynthesis seems to be controlled primarily by regulation of HisG enzymatic activity. The polypeptide is ATP phosphoribosyltransferase (Staphylococcus aureus (strain Mu3 / ATCC 700698)).